The chain runs to 48 residues: MAEFKSKLNKGHAFTSKCASLVKEQRARLYILRRCATMLCCWYIQGDE.

The helical transmembrane segment at 7-23 (KLNKGHAFTSKCASLVK) threads the bilayer. The interval 13–44 (AFTSKCASLVKEQRARLYILRRCATMLCCWYI) is required for DVL/RTFL small polypeptide activity.

Belongs to the DVL/RTFL small polypeptides family.

It localises to the cell membrane. Its function is as follows. Small polypeptide acting as a regulatory molecule which coordinates cellular responses required for differentiation, growth and development, probably by restricting polar cell proliferation in lateral organs and coordinating socket cell recruitment and differentiation at trichome sites. The polypeptide is Small polypeptide DEVIL 22 (Arabidopsis thaliana (Mouse-ear cress)).